Here is a 493-residue protein sequence, read N- to C-terminus: MHTLVFLSTRQVLQCQPAACQALPLLPRELFPLLFKVAFMDKKTVVLRELVHTWPFPLLSFQQLLQECAHCSRALLQERPSTESMQAVILGLTARLHTSEPGASTQPLCRKHALRVLDMTGLLDDGVEQDPGTMSMWDCTAAVARTCIAQQQGGAAEPGPAPIPVEVRVDLRVNRASYAFLREALRSSVGSPLRLCCRDLRAEDLPMRNTVALLQLLDAGCLRRVDLRFNNLGLRGLSVIIPHVARFQHLASLRLHYVHGDSRQPSVDGEDNFRYFLAQMGRFTCLRELSMGSSLLSGRLDQLLSTLQSPLESLELAFCALLPEDLRFLARSPHAAHLKKLDLSGNDLSGSQLAPFQGLLQASAATLLHLELTECQLADTQLLATLPILTQCASLRYLGLYGNPLSMAGLKELLRDSVAQAELRTVVHPFPVDCYEGLPWPPPASVLLEASINEEKFARVEAELHQLLLASGRAHVLWTTDIYGRLAADYFSL.

An LRR 1; degenerate repeat occupies 111–146 (KHALRVLDMTGLLDDGVEQDPGTMSMWDCTAAVART). One copy of the LRR 2; degenerate repeat lies at 194–218 (RLCCRDLRAEDLPMRNTVALLQLLD). Residues 219–246 (AGCLRRVDLRFNNLGLRGLSVIIPHVAR) form an LRR 3; degenerate repeat. Residues 247–282 (FQHLASLRLHYVHGDSRQPSVDGEDNFRYFLAQMGR) form an LRR 4; degenerate repeat. LRR repeat units follow at residues 283-307 (FTCLRELSMGSSLLSGRLDQLLSTL), 308-339 (QSPLESLELAFCALLPEDLRFLARSPHAAHLK), 340-360 (KLDLSGNDLSGSQLAPFQGLL), 364-391 (AATLLHLELTECQLADTQLLATLPILTQ), and 392-416 (CASLRYLGLYGNPLSMAGLKELLRD).

It belongs to the PRAME family. LRRC14 subfamily. In terms of assembly, interacts with IKBKB; disrupts IKBKB-IKBKG interaction preventing I-kappa-B-kinase (IKK) core complex formation and leading to a decrease of IKBKB phosphorylation and NF-kappaB activation. Interacts with CHUK.

It is found in the cytoplasm. In terms of biological role, negatively regulates Toll-like receptor-mediated NF-kappa-B signaling by disrupting IKK core complex formation through interaction with IKBKB. This Homo sapiens (Human) protein is Leucine-rich repeat-containing protein 14.